Consider the following 147-residue polypeptide: Fibromodulin (147 aa).

LRR repeat units follow at residues 1–15, 16–37, 40–61, 63–84, 85–105, and 108–128; these read LDHN…PLPR, SLRE…ALEG, NLTA…MRGL, SLIL…LPSA, LEQL…YFRG, and KLLY…ASNT. Asn-5 carries an N-linked (GlcNAc...) (keratan sulfate) asparagine glycan. An N-linked (GlcNAc...) (keratan sulfate) asparagine glycan is attached at Asn-40. Residue Asn-130 is glycosylated (N-linked (GlcNAc...) (keratan sulfate) asparagine). One copy of the LRR 7 repeat lies at 133-147; the sequence is SLLELDLSYNQLQKI.

The protein belongs to the small leucine-rich proteoglycan (SLRP) family. SLRP class II subfamily. Binds to type I and type II collagen. In terms of processing, binds keratan sulfate chains.

Its subcellular location is the secreted. It localises to the extracellular space. It is found in the extracellular matrix. Functionally, affects the rate of fibrils formation. May have a primary role in collagen fibrillogenesis. The chain is Fibromodulin (FMOD) from Sus scrofa (Pig).